The primary structure comprises 516 residues: Delta(24)-sterol reductase (516 aa).

Positions Met-1–Gly-22 are cleaved as a signal peptide. At Leu-23–Arg-31 the chain is on the lumenal side. The helical transmembrane segment at Trp-32–Val-52 threads the bilayer. Residues Arg-53 to His-516 lie on the Cytoplasmic side of the membrane. The FAD-binding PCMH-type domain maps to Phe-58 to Ala-234. FAD is bound at residue Thr-163 to Ser-175.

It belongs to the FAD-binding oxidoreductase/transferase type 4 family. As to quaternary structure, interacts with DHCR7; this interaction regulates DHCR7 activity. FAD is required as a cofactor.

It localises to the endoplasmic reticulum membrane. Its subcellular location is the golgi apparatus membrane. The enzyme catalyses cholesterol + NADP(+) = desmosterol + NADPH + H(+). The catalysed reaction is lanosterol + NADPH + H(+) = 24,25-dihydrolanosterol + NADP(+). It catalyses the reaction 5alpha-cholest-8-en-3beta-ol + NADP(+) = zymosterol + NADPH + H(+). The protein operates within steroid biosynthesis; cholesterol biosynthesis. Its function is as follows. Catalyzes the reduction of the delta-24 double bond of sterol intermediates during cholesterol biosynthesis. In addition to its cholesterol-synthesizing activity, can protect cells from oxidative stress by reducing caspase 3 activity during apoptosis induced by oxidative stress. Also protects against amyloid-beta peptide-induced apoptosis. This chain is Delta(24)-sterol reductase (Dhcr24), found in Rattus norvegicus (Rat).